The chain runs to 147 residues: Hemoglobin subunit beta-1 (147 aa).

Val-2 carries the N-acetylvaline modification. A Globin domain is found at 3 to 147; sequence HLTGEEKAAV…VATALAHKYH (145 aa). Lys-18 is modified (N6-succinyllysine). Position 45 is a phosphoserine (Ser-45). At Lys-60 the chain carries N6-succinyllysine. Heme b is bound by residues His-64 and His-93. The residue at position 105 (Arg-105) is an Asymmetric dimethylarginine. Residue Thr-124 is modified to Phosphothreonine.

Belongs to the globin family. Hb1 is a heterotetramer of two alpha chains and two beta-1 chains. As to expression, red blood cells.

Functionally, involved in oxygen transport from the lung to the various peripheral tissues. In Chalinolobus morio (Chocolate-wattled bat), this protein is Hemoglobin subunit beta-1 (HBB1).